Consider the following 326-residue polypeptide: HTH-type transcriptional regulator BlaA (326 aa).

One can recognise an HTH lysR-type domain in the interval 1-59; sequence MDVVNACRAFVKVSERGSFTVGAAAAQMSQSVASRRVAALEKHFGERLFDRASRRPSLT. The segment at residues 19-38 is a DNA-binding region (H-T-H motif); it reads FTVGAAAAQMSQSVASRRVA. Residues 289-326 form a disordered region; it reads TADHGPDPATGAGPGADAGTEPGARAEPGAPEEGAQAC. A compositionally biased stretch (low complexity) spans 295–326; that stretch reads DPATGAGPGADAGTEPGARAEPGAPEEGAQAC.

Belongs to the LysR transcriptional regulatory family.

Its function is as follows. Positive regulator of the expression of the gene (blaB) for beta-lactamase. It binds to the blaL-blaA intercistronic region. This Streptomyces cacaoi protein is HTH-type transcriptional regulator BlaA (blaA).